The sequence spans 300 residues: Protease HtpX homolog (300 aa).

The next 2 helical transmembrane spans lie at 7-24 and 29-46; these read GILM…GALI and GAII…FTFW. H130 serves as a coordination point for Zn(2+). E131 is an active-site residue. A Zn(2+)-binding site is contributed by H134. The next 2 membrane-spanning stretches (helical) occupy residues 145–165 and 174–194; these read VTAT…FFGG and PMGL…AGLV. E203 provides a ligand contact to Zn(2+).

It belongs to the peptidase M48B family. The cofactor is Zn(2+).

The protein resides in the cell inner membrane. This is Protease HtpX homolog from Cereibacter sphaeroides (strain ATCC 17029 / ATH 2.4.9) (Rhodobacter sphaeroides).